The following is a 497-amino-acid chain: Cobyric acid synthase (497 aa).

The GATase cobBQ-type domain occupies 257–431; sequence WLRVAAVRLP…WHGLLDNDDF (175 aa). C338 functions as the Nucleophile in the catalytic mechanism. H423 is a catalytic residue.

The protein belongs to the CobB/CobQ family. CobQ subfamily.

Its pathway is cofactor biosynthesis; adenosylcobalamin biosynthesis. Catalyzes amidations at positions B, D, E, and G on adenosylcobyrinic A,C-diamide. NH(2) groups are provided by glutamine, and one molecule of ATP is hydrogenolyzed for each amidation. The polypeptide is Cobyric acid synthase (Mycolicibacterium paratuberculosis (strain ATCC BAA-968 / K-10) (Mycobacterium paratuberculosis)).